The following is a 466-amino-acid chain: Glutamate--tRNA ligase (466 aa).

The 'HIGH' region signature appears at P9 to S19. The 'KMSKS' region signature appears at K237–R241. Position 240 (K240) interacts with ATP.

It belongs to the class-I aminoacyl-tRNA synthetase family. Glutamate--tRNA ligase type 1 subfamily. In terms of assembly, monomer.

It localises to the cytoplasm. The enzyme catalyses tRNA(Glu) + L-glutamate + ATP = L-glutamyl-tRNA(Glu) + AMP + diphosphate. Catalyzes the attachment of glutamate to tRNA(Glu) in a two-step reaction: glutamate is first activated by ATP to form Glu-AMP and then transferred to the acceptor end of tRNA(Glu). This Baumannia cicadellinicola subsp. Homalodisca coagulata protein is Glutamate--tRNA ligase.